The sequence spans 155 residues: Protein E6 (155 aa).

Zinc fingers lie at residues 39 to 75 and 112 to 148; these read CNFC…CRCC and CQNC…CRLC.

This sequence belongs to the papillomaviridae E6 protein family. Forms homodimers. Interacts with ubiquitin-protein ligase UBE3A/E6-AP; this interaction stimulates UBE3A ubiquitin activity. Interacts with host BAK1.

The protein resides in the host cytoplasm. It is found in the host nucleus. In terms of biological role, plays a major role in the induction and maintenance of cellular transformation. E6 associates with host UBE3A/E6-AP ubiquitin-protein ligase and modulates its activity. Protects host keratinocytes from apoptosis by mediating the degradation of host BAK1. May also inhibit host immune response. The polypeptide is Protein E6 (Homo sapiens (Human)).